Here is a 117-residue protein sequence, read N- to C-terminus: NADH-ubiquinone oxidoreductase chain 3 (117 aa).

3 helical membrane passes run 4-24 (IILIASLILTIVTIVMFLASI), 60-80 (ITIIFLIFDVEIALILPMIII), and 86-106 (IMIWTTTSIIFILILLIGLYH).

The protein belongs to the complex I subunit 3 family.

It localises to the mitochondrion membrane. The enzyme catalyses a ubiquinone + NADH + 5 H(+)(in) = a ubiquinol + NAD(+) + 4 H(+)(out). Its function is as follows. Core subunit of the mitochondrial membrane respiratory chain NADH dehydrogenase (Complex I) that is believed to belong to the minimal assembly required for catalysis. Complex I functions in the transfer of electrons from NADH to the respiratory chain. The immediate electron acceptor for the enzyme is believed to be ubiquinone. The chain is NADH-ubiquinone oxidoreductase chain 3 (mt:ND3) from Drosophila subobscura (Fruit fly).